Reading from the N-terminus, the 203-residue chain is Regulator of free ubiquitin chains 1 (203 aa).

It belongs to the RFU1 family.

It is found in the endosome. Its function is as follows. Inhibitor of the DOA4 deubiquitinase involved in the regulation of protein degradation by the proteasome and maintenance of a normal level of free ubiquitin. This chain is Regulator of free ubiquitin chains 1 (RFU1), found in Candida glabrata (strain ATCC 2001 / BCRC 20586 / JCM 3761 / NBRC 0622 / NRRL Y-65 / CBS 138) (Yeast).